Reading from the N-terminus, the 363-residue chain is MGLRTSPLHGRHEDRGASFTEFGGWNMPVDFDGIQAEHAAVREAAGIFDVSHMGEIEVSGPDAERLMQRLTTNDVSRLDPGDAQYAAITDDDGIMIDDTVVYRTPADWPGAFLFVPNAGHDAAAFDRWTDHRDAHDLDASVDNVTTDYGMVAVQGPDAPDLVAARAGDGVHDLGRFEAATVGVAGVECLVANTGYTGEAGVEIVFPADGAGAVWDAIANDCQPCGLGARDTLRMEHGFLLSGQDFDPEENPRTPFEAGIGFAVAPESGFVGRDALADTDSPEQQFVGLTLDERGVPRHGYAVTTPAGDEIGTVTSGTMSPTLGEPIGLGYVDSAHAADGTTVAVRIRGTDKQATITTPPFLDQ.

The protein belongs to the GcvT family. The glycine cleavage system is composed of four proteins: P, T, L and H.

It catalyses the reaction N(6)-[(R)-S(8)-aminomethyldihydrolipoyl]-L-lysyl-[protein] + (6S)-5,6,7,8-tetrahydrofolate = N(6)-[(R)-dihydrolipoyl]-L-lysyl-[protein] + (6R)-5,10-methylene-5,6,7,8-tetrahydrofolate + NH4(+). Functionally, the glycine cleavage system catalyzes the degradation of glycine. This is Probable aminomethyltransferase from Halobacterium salinarum (strain ATCC 29341 / DSM 671 / R1).